We begin with the raw amino-acid sequence, 246 residues long: MVTANLRFVVKVAYEYRSYGIKMSDLIQEGNIGLMKAVQKFDPDKGIRLISYAVWWIRAYIQNYILKSWSLVKLGTTQAHGKLFFSLARTRRELEKFGSGDAAVNVDDIARRLHVKPGEVREMEQRMGGRDLSLDAPMGEDGGNSHVDFVVSAAAPQDDEFADKEEAGLINARVRAALMRLDPREPFIIEQRVMNERPMTLKELGEHFGFSRERARQLEIRAKDKLKSELAALMAEVDPEAVAAQQ.

A Polymerase core binding motif is present at residues 25–38; sequence DLIQEGNIGLMKAV. The segment at residues 201–220 is a DNA-binding region (H-T-H motif); sequence LKELGEHFGFSRERARQLEI.

Belongs to the sigma-70 factor family.

Its function is as follows. Sigma factors are initiation factors that promote the attachment of RNA polymerase to specific initiation sites and are then released. This sigma factor is essential for late-stage differentiation of M.xanthus. This Myxococcus xanthus protein is RNA polymerase sigma-B factor (sigB).